The sequence spans 104 residues: NADH-quinone oxidoreductase subunit K (104 aa).

Helical transmembrane passes span Val-4–Ala-24, Val-31–Phe-51, and Ile-64–Leu-84.

The protein belongs to the complex I subunit 4L family. In terms of assembly, NDH-1 is composed of 14 different subunits. Subunits NuoA, H, J, K, L, M, N constitute the membrane sector of the complex.

It localises to the cell membrane. It catalyses the reaction a quinone + NADH + 5 H(+)(in) = a quinol + NAD(+) + 4 H(+)(out). Its function is as follows. NDH-1 shuttles electrons from NADH, via FMN and iron-sulfur (Fe-S) centers, to quinones in the respiratory chain. The immediate electron acceptor for the enzyme in this species is believed to be a menaquinone. Couples the redox reaction to proton translocation (for every two electrons transferred, four hydrogen ions are translocated across the cytoplasmic membrane), and thus conserves the redox energy in a proton gradient. The protein is NADH-quinone oxidoreductase subunit K of Geobacillus sp. (strain WCH70).